Here is a 423-residue protein sequence, read N- to C-terminus: Probable multifunctional protein ADE2 (423 aa).

The tract at residues 1–263 is SAICAR synthetase; sequence MSSLAEIASR…KVMDITATFS (263 aa). Residues 264-423 are AIR carboxylase; that stretch reads KHQQKCHVLV…NIYNANRKLE (160 aa).

In the N-terminal section; belongs to the SAICAR synthetase family. The protein in the C-terminal section; belongs to the AIR carboxylase family. Class II subfamily.

The enzyme catalyses 5-amino-1-(5-phospho-D-ribosyl)imidazole-4-carboxylate + L-aspartate + ATP = (2S)-2-[5-amino-1-(5-phospho-beta-D-ribosyl)imidazole-4-carboxamido]succinate + ADP + phosphate + 2 H(+). It catalyses the reaction 5-amino-1-(5-phospho-D-ribosyl)imidazole-4-carboxylate + H(+) = 5-amino-1-(5-phospho-beta-D-ribosyl)imidazole + CO2. Its pathway is purine metabolism; IMP biosynthesis via de novo pathway; 5-amino-1-(5-phospho-D-ribosyl)imidazole-4-carboxamide from 5-amino-1-(5-phospho-D-ribosyl)imidazole-4-carboxylate: step 1/2. It functions in the pathway purine metabolism; IMP biosynthesis via de novo pathway; 5-amino-1-(5-phospho-D-ribosyl)imidazole-4-carboxylate from 5-amino-1-(5-phospho-D-ribosyl)imidazole (carboxylase route): step 1/1. This is Probable multifunctional protein ADE2 from Caenorhabditis elegans.